A 141-amino-acid polypeptide reads, in one-letter code: Large ribosomal subunit protein uL14m (141 aa).

The N-terminal 19 residues, 1-19 (MALSLSGLILPKLMQQRAF), are a transit peptide targeting the mitochondrion.

The protein belongs to the universal ribosomal protein uL14 family. Component of the mitochondrial ribosome large subunit (39S) which comprises a 16S rRNA and about 50 distinct proteins. Interacts with MALSU1.

The protein localises to the mitochondrion. In terms of biological role, may form part of 2 intersubunit bridges in the assembled ribosome. Upon binding to MALSU1, intersubunit bridge formation is blocked, preventing ribosome formation and repressing translation. This Danio rerio (Zebrafish) protein is Large ribosomal subunit protein uL14m (mrpl14).